Here is a 429-residue protein sequence, read N- to C-terminus: Enolase (429 aa).

Residue Gln168 coordinates (2R)-2-phosphoglycerate. Catalysis depends on Glu210, which acts as the Proton donor. The Mg(2+) site is built by Asp247, Glu288, and Asp315. 4 residues coordinate (2R)-2-phosphoglycerate: Lys340, Arg369, Ser370, and Lys391. The active-site Proton acceptor is the Lys340.

Belongs to the enolase family. Requires Mg(2+) as cofactor.

The protein localises to the cytoplasm. Its subcellular location is the secreted. It localises to the cell surface. The enzyme catalyses (2R)-2-phosphoglycerate = phosphoenolpyruvate + H2O. It participates in carbohydrate degradation; glycolysis; pyruvate from D-glyceraldehyde 3-phosphate: step 4/5. Functionally, catalyzes the reversible conversion of 2-phosphoglycerate (2-PG) into phosphoenolpyruvate (PEP). It is essential for the degradation of carbohydrates via glycolysis. The protein is Enolase of Trichormus variabilis (strain ATCC 29413 / PCC 7937) (Anabaena variabilis).